The primary structure comprises 198 residues: Putative transposase InsO for insertion sequence element IS911B (198 aa).

In terms of domain architecture, Integrase catalytic spans 105 to 198; the sequence is AVTEPNQVWC…YCGDTGSGRV (94 aa).

Functionally, involved in the transposition of the insertion sequence IS911B. This Escherichia coli (strain K12) protein is Putative transposase InsO for insertion sequence element IS911B (insO2).